The following is a 297-amino-acid chain: Heme A synthase (297 aa).

The Cytoplasmic segment spans residues 1–6 (MHKRLK). Residues 7–27 (IYSVITSIGVLIVLLQGALVT) traverse the membrane as a helical segment. Topologically, residues 28–62 (KTGSGEGCGATWPLCFGEVIPTNPAIETIIEYSHR) are extracellular. A disulfide bridge links Cys-35 with Cys-42. Glu-58 is an active-site residue. His-61 contacts heme o. The chain crosses the membrane as a helical span at residues 63 to 83 (IVSGLVGAMIIILAIWAWKQL). The Cytoplasmic segment spans residues 84 to 93 (KHMREAKALS). Residues 94–114 (FAAVILIIFQGLLGAGAVVFG) form a helical membrane-spanning segment. The Extracellular portion of the chain corresponds to 115-118 (QSKA). A helical membrane pass occupies residues 119–139 (ILALHFGISAMSLAAVVLLTI). His-123 lines the heme o pocket. The Cytoplasmic segment spans residues 140-156 (LAFEDGREHTMAPKVSR). A helical membrane pass occupies residues 157 to 177 (GFKYYVFFVITYCYAVIYSGA). Topologically, residues 178 to 210 (YVKHSEATLACAGFPLCNGQIFPGLYGPVGAHY) are extracellular. Cysteines 188 and 194 form a disulfide. The helical transmembrane segment at 211-231 (FHRVVGTILLLFLLILMIWTL) threads the bilayer. Residue His-212 participates in heme b binding. At 232–242 (SRYRHYRVLTW) the chain is on the cytoplasmic side. Residues 243 to 263 (TAVLSFLLVVGQFISGISIVF) traverse the membrane as a helical segment. Over 264-271 (TQNALSVG) the chain is Extracellular. The helical transmembrane segment at 272–292 (LIHALIISILFSALSYMTMII) threads the bilayer. His-274 lines the heme b pocket. At 293–297 (TRPSH) the chain is on the cytoplasmic side.

The protein belongs to the COX15/CtaA family. Type 1 subfamily. As to quaternary structure, interacts with CtaB. It depends on heme b as a cofactor.

The protein localises to the cell membrane. The enzyme catalyses Fe(II)-heme o + 2 A + H2O = Fe(II)-heme a + 2 AH2. It participates in porphyrin-containing compound metabolism; heme A biosynthesis; heme A from heme O: step 1/1. Its function is as follows. Catalyzes the conversion of heme O to heme A by two successive hydroxylations of the methyl group at C8. The first hydroxylation forms heme I, the second hydroxylation results in an unstable dihydroxymethyl group, which spontaneously dehydrates, resulting in the formyl group of heme A. This chain is Heme A synthase, found in Alkalihalophilus pseudofirmus (strain ATCC BAA-2126 / JCM 17055 / OF4) (Bacillus pseudofirmus).